A 330-amino-acid polypeptide reads, in one-letter code: Aspartate--ammonia ligase (330 aa).

The protein belongs to the class-II aminoacyl-tRNA synthetase family. AsnA subfamily.

The protein localises to the cytoplasm. The catalysed reaction is L-aspartate + NH4(+) + ATP = L-asparagine + AMP + diphosphate + H(+). Its pathway is amino-acid biosynthesis; L-asparagine biosynthesis; L-asparagine from L-aspartate (ammonia route): step 1/1. The sequence is that of Aspartate--ammonia ligase from Escherichia coli (strain SMS-3-5 / SECEC).